Reading from the N-terminus, the 423-residue chain is Serine hydroxymethyltransferase (423 aa).

(6S)-5,6,7,8-tetrahydrofolate is bound by residues Leu120 and 124–126 (GHL). Lys229 carries the post-translational modification N6-(pyridoxal phosphate)lysine. 353-355 (SPF) contacts (6S)-5,6,7,8-tetrahydrofolate.

The protein belongs to the SHMT family. Homodimer. It depends on pyridoxal 5'-phosphate as a cofactor.

Its subcellular location is the cytoplasm. It catalyses the reaction (6R)-5,10-methylene-5,6,7,8-tetrahydrofolate + glycine + H2O = (6S)-5,6,7,8-tetrahydrofolate + L-serine. It participates in one-carbon metabolism; tetrahydrofolate interconversion. It functions in the pathway amino-acid biosynthesis; glycine biosynthesis; glycine from L-serine: step 1/1. Its function is as follows. Catalyzes the reversible interconversion of serine and glycine with tetrahydrofolate (THF) serving as the one-carbon carrier. This reaction serves as the major source of one-carbon groups required for the biosynthesis of purines, thymidylate, methionine, and other important biomolecules. Also exhibits THF-independent aldolase activity toward beta-hydroxyamino acids, producing glycine and aldehydes, via a retro-aldol mechanism. This Synechococcus sp. (strain RCC307) protein is Serine hydroxymethyltransferase.